Here is a 475-residue protein sequence, read N- to C-terminus: Ribulose bisphosphate carboxylase large chain (475 aa).

A propeptide spanning residues Met1–Ser2 is cleaved from the precursor. Pro3 bears the N-acetylproline mark. Lys14 carries the post-translational modification N6,N6,N6-trimethyllysine. Substrate contacts are provided by Asn123 and Thr173. Catalysis depends on Lys175, which acts as the Proton acceptor. Lys177 is a substrate binding site. Mg(2+) is bound by residues Lys201, Asp203, and Glu204. Lys201 is modified (N6-carboxylysine). His294 (proton acceptor) is an active-site residue. Residues Arg295, His327, and Ser379 each contribute to the substrate site.

This sequence belongs to the RuBisCO large chain family. Type I subfamily. As to quaternary structure, heterohexadecamer of 8 large chains and 8 small chains; disulfide-linked. The disulfide link is formed within the large subunit homodimers. Mg(2+) is required as a cofactor. Post-translationally, the disulfide bond which can form in the large chain dimeric partners within the hexadecamer appears to be associated with oxidative stress and protein turnover.

Its subcellular location is the plastid. The protein localises to the chloroplast. The enzyme catalyses 2 (2R)-3-phosphoglycerate + 2 H(+) = D-ribulose 1,5-bisphosphate + CO2 + H2O. It catalyses the reaction D-ribulose 1,5-bisphosphate + O2 = 2-phosphoglycolate + (2R)-3-phosphoglycerate + 2 H(+). In terms of biological role, ruBisCO catalyzes two reactions: the carboxylation of D-ribulose 1,5-bisphosphate, the primary event in carbon dioxide fixation, as well as the oxidative fragmentation of the pentose substrate in the photorespiration process. Both reactions occur simultaneously and in competition at the same active site. This is Ribulose bisphosphate carboxylase large chain from Carpinus caroliniana (American hornbeam).